The chain runs to 79 residues: uncharacterized protein (79 aa).

A helical membrane pass occupies residues 53-73 (LFFAYMVAYIGFGILSIGMIV).

It localises to the membrane. This is an uncharacterized protein from Escherichia coli O157:H7.